Here is a 177-residue protein sequence, read N- to C-terminus: ATP synthase subunit delta (177 aa).

This sequence belongs to the ATPase delta chain family. As to quaternary structure, F-type ATPases have 2 components, F(1) - the catalytic core - and F(0) - the membrane proton channel. F(1) has five subunits: alpha(3), beta(3), gamma(1), delta(1), epsilon(1). F(0) has three main subunits: a(1), b(2) and c(10-14). The alpha and beta chains form an alternating ring which encloses part of the gamma chain. F(1) is attached to F(0) by a central stalk formed by the gamma and epsilon chains, while a peripheral stalk is formed by the delta and b chains.

Its subcellular location is the cell membrane. In terms of biological role, f(1)F(0) ATP synthase produces ATP from ADP in the presence of a proton or sodium gradient. F-type ATPases consist of two structural domains, F(1) containing the extramembraneous catalytic core and F(0) containing the membrane proton channel, linked together by a central stalk and a peripheral stalk. During catalysis, ATP synthesis in the catalytic domain of F(1) is coupled via a rotary mechanism of the central stalk subunits to proton translocation. Its function is as follows. This protein is part of the stalk that links CF(0) to CF(1). It either transmits conformational changes from CF(0) to CF(1) or is implicated in proton conduction. This Exiguobacterium sibiricum (strain DSM 17290 / CCUG 55495 / CIP 109462 / JCM 13490 / 255-15) protein is ATP synthase subunit delta.